The primary structure comprises 1057 residues: Self-sufficient cytochrome P450 monooxygenase CYP505E3 (1057 aa).

Residue cysteine 403 coordinates heme. The disordered stretch occupies residues 465–488 (PSAAPFSSHARETTNASLPASPGT). Residues 494-634 (MYVLYGSNTG…AFEAWETKLW (141 aa)) form the Flavodoxin-like domain. FMN-binding positions include 500–504 (SNTGT) and 578–610 (VFGC…QRLV). Positions 671-900 (HDAALGTVIE…RASNAAFHLP (230 aa)) constitute an FAD-binding FR-type domain.

In the N-terminal section; belongs to the cytochrome P450 family. The cofactor is FAD. FMN serves as cofactor. Heme is required as a cofactor.

The catalysed reaction is 2 oxidized [cytochrome P450] + NADPH = 2 reduced [cytochrome P450] + NADP(+) + H(+). It catalyses the reaction an organic molecule + reduced [NADPH--hemoprotein reductase] + O2 = an alcohol + oxidized [NADPH--hemoprotein reductase] + H2O + H(+). The enzyme catalyses dodecan-1-ol + reduced [NADPH--hemoprotein reductase] + O2 = 1,5-dodecanediol + oxidized [NADPH--hemoprotein reductase] + H2O + H(+). It carries out the reaction dodecan-1-ol + reduced [NADPH--hemoprotein reductase] + O2 = 1,6-dodecanediol + oxidized [NADPH--hemoprotein reductase] + H2O + H(+). Self-sufficient cytochrome P450 monooxygenase that catalyzes the regioselective in-chain hydroxylation of fatty alcohols (C9-15) as well as fatty acids (C9-15) at the omega-1 to omega-7 or omega-1 to omega-6 positions, respectively. Is also able to convert naphthalene to 1-naphthol and 1-naphthol further to 1,3-dihydroxynaphthalene. In Phanerodontia chrysosporium (White-rot fungus), this protein is Self-sufficient cytochrome P450 monooxygenase CYP505E3.